Consider the following 44-residue polypeptide: Diuretic hormone (44 aa).

Residue Val44 is modified to Valine amide.

Its subcellular location is the secreted. Regulation of fluid secretion. Stimulates primary urine secretion by Malpighian tubules and causes a dose-dependent stimulation of cAMP levels in the tubules. May act as clearance peptide in that it may remove metabolic waste from the hemolymph. The polypeptide is Diuretic hormone (Stomoxys calcitrans (Stable fly)).